The chain runs to 384 residues: Flap endonuclease 1 (384 aa).

Residues 1–105 (MGIKGLTKLL…GELAKRKDKR (105 aa)) are N-domain. D34 lines the Mg(2+) pocket. R71 lines the DNA pocket. D87, E159, E161, D180, and D182 together coordinate Mg(2+). The I-domain stretch occupies residues 123–254 (EIEKLSKRTV…VNALKYIKQY (132 aa)). Residue E159 coordinates DNA. DNA is bound by residues G232 and D234. Residue D234 coordinates Mg(2+). Positions 337-345 (GQNRLETFF) are interaction with PCNA. The disordered stretch occupies residues 353-384 (STVGKRKEPEKGKGKFGAAGGKKSKGVTKRKF). Residues 374–384 (KKSKGVTKRKF) show a composition bias toward basic residues.

The protein belongs to the XPG/RAD2 endonuclease family. FEN1 subfamily. As to quaternary structure, interacts with PCNA. Three molecules of FEN1 bind to one PCNA trimer with each molecule binding to one PCNA monomer. PCNA stimulates the nuclease activity without altering cleavage specificity. The cofactor is Mg(2+). Post-translationally, phosphorylated. Phosphorylation upon DNA damage induces relocalization to the nuclear plasma.

It is found in the nucleus. The protein localises to the nucleolus. The protein resides in the nucleoplasm. Its subcellular location is the mitochondrion. Structure-specific nuclease with 5'-flap endonuclease and 5'-3' exonuclease activities involved in DNA replication and repair. During DNA replication, cleaves the 5'-overhanging flap structure that is generated by displacement synthesis when DNA polymerase encounters the 5'-end of a downstream Okazaki fragment. It enters the flap from the 5'-end and then tracks to cleave the flap base, leaving a nick for ligation. Also involved in the long patch base excision repair (LP-BER) pathway, by cleaving within the apurinic/apyrimidinic (AP) site-terminated flap. Acts as a genome stabilization factor that prevents flaps from equilibrating into structures that lead to duplications and deletions. Also possesses 5'-3' exonuclease activity on nicked or gapped double-stranded DNA, and exhibits RNase H activity. Also involved in replication and repair of rDNA and in repairing mitochondrial DNA. This Micromonas commoda (strain RCC299 / NOUM17 / CCMP2709) (Picoplanktonic green alga) protein is Flap endonuclease 1.